The chain runs to 278 residues: Tryptophan synthase alpha chain (278 aa).

Residues Glu-50 and Asp-61 each act as proton acceptor in the active site.

It belongs to the TrpA family. As to quaternary structure, tetramer of two alpha and two beta chains.

It catalyses the reaction (1S,2R)-1-C-(indol-3-yl)glycerol 3-phosphate + L-serine = D-glyceraldehyde 3-phosphate + L-tryptophan + H2O. It functions in the pathway amino-acid biosynthesis; L-tryptophan biosynthesis; L-tryptophan from chorismate: step 5/5. In terms of biological role, the alpha subunit is responsible for the aldol cleavage of indoleglycerol phosphate to indole and glyceraldehyde 3-phosphate. The chain is Tryptophan synthase alpha chain from Methylobacterium nodulans (strain LMG 21967 / CNCM I-2342 / ORS 2060).